Reading from the N-terminus, the 132-residue chain is Small ribosomal subunit protein uS12 (132 aa).

Residue D89 is modified to 3-methylthioaspartic acid. The disordered stretch occupies residues 102–132 (LDTSGVADRKQSRSKYGAKVPKAGAAPAKKK). A compositionally biased stretch (low complexity) spans 118-132 (GAKVPKAGAAPAKKK).

It belongs to the universal ribosomal protein uS12 family. As to quaternary structure, part of the 30S ribosomal subunit. Contacts proteins S8 and S17. May interact with IF1 in the 30S initiation complex.

With S4 and S5 plays an important role in translational accuracy. Its function is as follows. Interacts with and stabilizes bases of the 16S rRNA that are involved in tRNA selection in the A site and with the mRNA backbone. Located at the interface of the 30S and 50S subunits, it traverses the body of the 30S subunit contacting proteins on the other side and probably holding the rRNA structure together. The combined cluster of proteins S8, S12 and S17 appears to hold together the shoulder and platform of the 30S subunit. The protein is Small ribosomal subunit protein uS12 of Chlorobaculum tepidum (strain ATCC 49652 / DSM 12025 / NBRC 103806 / TLS) (Chlorobium tepidum).